A 334-amino-acid polypeptide reads, in one-letter code: Protein-methionine-sulfoxide reductase catalytic subunit MsrP (334 aa).

The segment at residues 1–44 (MKKIRPLTEADVTAESAFFMQRRQVLKALGISAAALSLPSTAQA) is a signal peptide (tat-type signal). Residues N88, 91–92 (YE), C146, T181, N233, R238, and 249–251 (GIK) contribute to the Mo-molybdopterin site.

This sequence belongs to the MsrP family. As to quaternary structure, heterodimer of a catalytic subunit (MsrP) and a heme-binding subunit (MsrQ). Mo-molybdopterin is required as a cofactor. Post-translationally, predicted to be exported by the Tat system. The position of the signal peptide cleavage has not been experimentally proven.

It localises to the periplasm. It catalyses the reaction L-methionyl-[protein] + a quinone + H2O = L-methionyl-(S)-S-oxide-[protein] + a quinol. It carries out the reaction L-methionyl-[protein] + a quinone + H2O = L-methionyl-(R)-S-oxide-[protein] + a quinol. Functionally, part of the MsrPQ system that repairs oxidized periplasmic proteins containing methionine sulfoxide residues (Met-O), using respiratory chain electrons. Thus protects these proteins from oxidative-stress damage caused by reactive species of oxygen and chlorine generated by the host defense mechanisms. MsrPQ is essential for the maintenance of envelope integrity under bleach stress, rescuing a wide series of structurally unrelated periplasmic proteins from methionine oxidation, including the primary periplasmic chaperone SurA and the lipoprotein Pal. The catalytic subunit MsrP is non-stereospecific, being able to reduce both (R-) and (S-) diastereoisomers of methionine sulfoxide. This is Protein-methionine-sulfoxide reductase catalytic subunit MsrP from Salmonella agona (strain SL483).